A 70-amino-acid polypeptide reads, in one-letter code: MKDYEIVFTVFSSIIFAFLLFRLCKFCCVFCCALCNVPDNVYGRKRPRGSIVVEENEDDGNGEKEGLLNV.

Residues 15–37 (IFAFLLFRLCKFCCVFCCALCNV) form a helical membrane-spanning segment.

The protein localises to the membrane. This is an uncharacterized protein from Dictyostelium discoideum (Social amoeba).